The primary structure comprises 147 residues: Hemoglobin subunit beta-A/B (147 aa).

Residues 2–147 enclose the Globin domain; that stretch reads EWTDAERSAI…VVNALKRQYH (146 aa). Positions 63 and 92 each coordinate heme b.

The protein belongs to the globin family. Heterotetramer of two alpha chains and two beta chains. As to expression, red blood cells.

In terms of biological role, involved in oxygen transport from gills to the various peripheral tissues. The protein is Hemoglobin subunit beta-A/B of Cyprinus carpio (Common carp).